Reading from the N-terminus, the 861-residue chain is Probable beta-glucosidase A (861 aa).

An N-terminal signal peptide occupies residues 1 to 19 (MKLGWIEVAALAAASVVSA). N-linked (GlcNAc...) asparagine glycans are attached at residues Asn-62, Asn-212, and Asn-253. Residue Asp-281 is part of the active site. Residues Asn-316, Asn-323, Asn-355, Asn-443, Asn-524, Asn-543, Asn-565, Asn-669, and Asn-713 are each glycosylated (N-linked (GlcNAc...) asparagine). Residues 730 to 754 (DSKYIPEGATDGSAQPRLPASGGAG) are disordered. Asn-846 is a glycosylation site (N-linked (GlcNAc...) asparagine).

It belongs to the glycosyl hydrolase 3 family.

The protein resides in the secreted. It catalyses the reaction Hydrolysis of terminal, non-reducing beta-D-glucosyl residues with release of beta-D-glucose.. It participates in glycan metabolism; cellulose degradation. Its function is as follows. Beta-glucosidases are one of a number of cellulolytic enzymes involved in the degradation of cellulosic biomass. Catalyzes the last step releasing glucose from the inhibitory cellobiose. This is Probable beta-glucosidase A (bglA) from Aspergillus oryzae (strain ATCC 42149 / RIB 40) (Yellow koji mold).